Consider the following 127-residue polypeptide: Protein YwpG (127 aa).

As to quaternary structure, interacts with both the D1 and D2 domains of dynamin-like protein DynA.

The protein resides in the cell membrane. In Bacillus subtilis (strain 168), this protein is Protein YwpG (ywpG).